Consider the following 711-residue polypeptide: Constitutive ornithine decarboxylase (711 aa).

N6-(pyridoxal phosphate)lysine is present on K347.

It belongs to the Orn/Lys/Arg decarboxylase class-I family. The cofactor is pyridoxal 5'-phosphate.

It catalyses the reaction L-ornithine + H(+) = putrescine + CO2. Its pathway is amine and polyamine biosynthesis; putrescine biosynthesis via L-ornithine pathway; putrescine from L-ornithine: step 1/1. The polypeptide is Constitutive ornithine decarboxylase (speC) (Escherichia coli (strain K12)).